The following is a 159-amino-acid chain: RNA pyrophosphohydrolase (159 aa).

Residues 6-149 (GFRPNVGIIL…KREVYRRALK (144 aa)) enclose the Nudix hydrolase domain. A Nudix box motif is present at residues 38–59 (GGINPDETPEDALYRELNEEVG).

The protein belongs to the Nudix hydrolase family. RppH subfamily. The cofactor is a divalent metal cation.

Its function is as follows. Accelerates the degradation of transcripts by removing pyrophosphate from the 5'-end of triphosphorylated RNA, leading to a more labile monophosphorylated state that can stimulate subsequent ribonuclease cleavage. The protein is RNA pyrophosphohydrolase of Pseudomonas fluorescens (strain SBW25).